Consider the following 299-residue polypeptide: Taste receptor type 2 member 50 (299 aa).

A topological domain (extracellular) is located at residue methionine 1. A helical transmembrane segment spans residues isoleucine 2–phenylalanine 22. The Cytoplasmic portion of the chain corresponds to alanine 23–arginine 55. Residues isoleucine 56–tyrosine 76 form a helical membrane-spanning segment. Residues serine 77–alanine 87 lie on the Extracellular side of the membrane. A helical transmembrane segment spans residues tryptophan 88–leucine 108. Residues lysine 109–arginine 126 are Cytoplasmic-facing. The chain crosses the membrane as a helical span at residues serine 127–alanine 147. The Extracellular portion of the chain corresponds to asparagine 148–threonine 181. A glycan (N-linked (GlcNAc...) asparagine) is linked at asparagine 161. The helical transmembrane segment at leucine 182–leucine 202 threads the bilayer. Over cysteine 203 to glutamine 229 the chain is Cytoplasmic. A helical transmembrane segment spans residues threonine 230–tryptophan 250. The Extracellular segment spans residues serine 251–proline 259. Residues valine 260 to isoleucine 280 form a helical membrane-spanning segment. At tryptophan 281–cysteine 299 the chain is on the cytoplasmic side.

This sequence belongs to the G-protein coupled receptor T2R family. In terms of tissue distribution, expressed in subsets of taste receptor cells of the tongue and exclusively in gustducin-positive cells.

It is found in the membrane. Functionally, receptor that may play a role in the perception of bitterness and is gustducin-linked. May play a role in sensing the chemical composition of the gastrointestinal content. The activity of this receptor may stimulate alpha gustducin, mediate PLC-beta-2 activation and lead to the gating of TRPM5. The polypeptide is Taste receptor type 2 member 50 (TAS2R50) (Homo sapiens (Human)).